Consider the following 478-residue polypeptide: Ribulose bisphosphate carboxylase large chain (478 aa).

Positions 1 to 2 (MS) are excised as a propeptide. The residue at position 3 (P3) is an N-acetylproline. N6,N6,N6-trimethyllysine is present on K14. 2 residues coordinate substrate: N123 and T173. Residue K175 is the Proton acceptor of the active site. Residue K177 coordinates substrate. Positions 201, 203, and 204 each coordinate Mg(2+). K201 bears the N6-carboxylysine mark. Catalysis depends on H294, which acts as the Proton acceptor. Substrate-binding residues include R295, H327, and S379.

The protein belongs to the RuBisCO large chain family. Type I subfamily. As to quaternary structure, heterohexadecamer of 8 large chains and 8 small chains; disulfide-linked. The disulfide link is formed within the large subunit homodimers. Requires Mg(2+) as cofactor. Post-translationally, the disulfide bond which can form in the large chain dimeric partners within the hexadecamer appears to be associated with oxidative stress and protein turnover.

It is found in the plastid. Its subcellular location is the chloroplast. The catalysed reaction is 2 (2R)-3-phosphoglycerate + 2 H(+) = D-ribulose 1,5-bisphosphate + CO2 + H2O. It carries out the reaction D-ribulose 1,5-bisphosphate + O2 = 2-phosphoglycolate + (2R)-3-phosphoglycerate + 2 H(+). Functionally, ruBisCO catalyzes two reactions: the carboxylation of D-ribulose 1,5-bisphosphate, the primary event in carbon dioxide fixation, as well as the oxidative fragmentation of the pentose substrate in the photorespiration process. Both reactions occur simultaneously and in competition at the same active site. The chain is Ribulose bisphosphate carboxylase large chain from Drimys granadensis.